Reading from the N-terminus, the 430-residue chain is Adenylosuccinate synthetase (430 aa).

GTP contacts are provided by residues 12–18 (GDEGKGK) and 40–42 (GHT). The Proton acceptor role is filled by aspartate 13. Positions 13 and 40 each coordinate Mg(2+). Residues 13 to 16 (DEGK), 38 to 41 (NAGH), threonine 128, arginine 142, glutamine 223, threonine 238, and arginine 302 each bind IMP. Histidine 41 functions as the Proton donor in the catalytic mechanism. Substrate is bound at residue 298–304 (TTTGRPR). GTP is bound by residues arginine 304, 330–332 (SID), and 412–414 (SVG).

This sequence belongs to the adenylosuccinate synthetase family. In terms of assembly, homodimer. It depends on Mg(2+) as a cofactor.

It is found in the cytoplasm. It carries out the reaction IMP + L-aspartate + GTP = N(6)-(1,2-dicarboxyethyl)-AMP + GDP + phosphate + 2 H(+). It functions in the pathway purine metabolism; AMP biosynthesis via de novo pathway; AMP from IMP: step 1/2. Its function is as follows. Plays an important role in the de novo pathway of purine nucleotide biosynthesis. Catalyzes the first committed step in the biosynthesis of AMP from IMP. The sequence is that of Adenylosuccinate synthetase from Streptococcus equi subsp. zooepidemicus (strain H70).